A 341-amino-acid polypeptide reads, in one-letter code: Tryptophan--tRNA ligase (341 aa).

ATP is bound by residues 11-13 and 19-20; these read RPT and GH. Positions 12-20 match the 'HIGH' region motif; sequence PTGKLHIGH. Aspartate 140 serves as a coordination point for L-tryptophan. Residues 152–154, leucine 193, and 201–205 each bind ATP; these read GED and KMSKS. The 'KMSKS' region signature appears at 201–205; sequence KMSKS.

Belongs to the class-I aminoacyl-tRNA synthetase family. In terms of assembly, homodimer.

It localises to the cytoplasm. It catalyses the reaction tRNA(Trp) + L-tryptophan + ATP = L-tryptophyl-tRNA(Trp) + AMP + diphosphate + H(+). In terms of biological role, catalyzes the attachment of tryptophan to tRNA(Trp). The chain is Tryptophan--tRNA ligase from Clostridium longisporum.